The primary structure comprises 737 residues: MPEATEHPPIGEAQTEPAQSGCPMVIKPPVEGGSNRDWWPNAVNLKMLQKDPEVIDPIDEGYDYREAVQTLDVDQLARDFDELCTNSQDWWPADFGHYGPLFIRMSWHAAGTYRVQDGRGGAGKGMQRFAPLNSWPDNVSLDKARRLLWPLKKKYGKKLSWSDLIVYAGNRAMENMGFKTAGFAFGRPDYWEPEEDVYWGAEHEWLGSQDRYAGANGDRTKLENPLGASHMGLIYVNPEGPEGNPDPIAAAIDIRETFGRMAMNDVETAALIVGGHTFGKTHGATDIVNGPEPEAAPLEQMGLGWSNPGVGIDTVSSGLEVTWTHTPTKWDNSFLEILYGNEWELFKSPAGANQWRPKDNGWADSVPMAQGTGKTHPAMLTTDLSMRMDPIYGEITRRWLDHPEELAEEYAKAWFKLLHRDMGPVQRYLGPLVPTQTWLWQDIVPAGKPLSDADVATLKGAIADSGLTVQQLVSTAWKAASSFRISDMRGGANGGRIRLQPQLGWESNEPDELAQVISKLEEIQGSSGIDVSFADLVVLGGNVGIETAAKAAGFDIEVPFSSGRGDATQEQTDVEAFSYLEPKADGFRNYVGKGLNLPAEYQLIDQANLLNLSAPQMTVLIGGLRALGITHGDSKLGVLTDTPGQLTNDYFVNLTDMGVKWAPAPADDGTYVGTDRDTGEVKYTASRVDLLFGSNSQLRALAEVYAEDDSRDKFVKDFVAAWVNVMDADRYDIGKGA.

The interval 1-33 (MPEATEHPPIGEAQTEPAQSGCPMVIKPPVEGG) is disordered. A cross-link (tryptophyl-tyrosyl-methioninium (Trp-Tyr) (with M-261)) is located at residues 107–235 (WHAAGTYRVQ…LGASHMGLIY (129 aa)). Residue His-108 is the Proton acceptor of the active site. The tryptophyl-tyrosyl-methioninium (Tyr-Met) (with W-107) cross-link spans 235 to 261 (YVNPEGPEGNPDPIAAAIDIRETFGRM). Residue His-276 participates in heme binding.

The protein belongs to the peroxidase family. Peroxidase/catalase subfamily. In terms of assembly, homodimer or homotetramer. It depends on heme b as a cofactor. In terms of processing, formation of the three residue Trp-Tyr-Met cross-link is important for the catalase, but not the peroxidase activity of the enzyme.

The catalysed reaction is H2O2 + AH2 = A + 2 H2O. It carries out the reaction 2 H2O2 = O2 + 2 H2O. Functionally, bifunctional enzyme with both catalase and broad-spectrum peroxidase activity. May play a role in polycyclic aromatic hydrocarbon (PAH) metabolism. This chain is Catalase-peroxidase, found in Mycolicibacterium vanbaalenii (Mycobacterium vanbaalenii).